We begin with the raw amino-acid sequence, 510 residues long: MSKSPVAIIILDGFGKRAETVGNAVAQANKPNFDRYWANFPHGELKAAGLDVGLPEGQMGNSEVGHTNIGAGRIVYQSLTRIDKAIEEGEFQENKALNNAFTHTKENNSDLHLFGLLSDGGVHSHINHLVALLETAKDKGVKNVYIHAFLDGRDVAPQSSLEYLETLQKAISDLNYGAIATVSGRFYAMDRDKRWERVEKAYKAIVNAEGEKFEDPIELVKASYANDKNDEFVVPAIITKDGKPVATVKDNDAVIFFNFRPDRAIQLSNAFTDKEWDHFDRGANHPKNIKFVTMTLYNPSIDAEVAFEPIEMKNVIGEVLSNEGLSQLRIAETEKYPHVTFFMNGGRNEEFPGENRILINSPKVETYDLQPEMSAYEVTDALVEDIKNDKHDAIILNFANPDMVGHSGMLEPTIKAIEAVDENLGRVVDLILEKGGSAIIFADHGNSETMSTPEGKPHTAHTTVPVPVIVTKKGVTLREGGRLADVAPTMLDLLGVKKPAEMTGESLIQK.

Mn(2+) is bound by residues Asp12 and Ser62. Ser62 functions as the Phosphoserine intermediate in the catalytic mechanism. Substrate contacts are provided by residues His123, 153-154, Arg185, Arg191, 260-263, and Lys335; these read RD and RPDR. Positions 402, 406, 443, 444, and 461 each coordinate Mn(2+).

This sequence belongs to the BPG-independent phosphoglycerate mutase family. As to quaternary structure, monomer. It depends on Mn(2+) as a cofactor.

It carries out the reaction (2R)-2-phosphoglycerate = (2R)-3-phosphoglycerate. The protein operates within carbohydrate degradation; glycolysis; pyruvate from D-glyceraldehyde 3-phosphate: step 3/5. In terms of biological role, catalyzes the interconversion of 2-phosphoglycerate and 3-phosphoglycerate. The chain is 2,3-bisphosphoglycerate-independent phosphoglycerate mutase from Listeria monocytogenes serotype 4b (strain F2365).